The chain runs to 244 residues: Biosynthetic peptidoglycan transglycosylase (244 aa).

The helical transmembrane segment at 25 to 45 (LLLLLAIALLYQSWFLLHIIY) threads the bilayer.

This sequence belongs to the glycosyltransferase 51 family.

The protein resides in the cell inner membrane. It carries out the reaction [GlcNAc-(1-&gt;4)-Mur2Ac(oyl-L-Ala-gamma-D-Glu-L-Lys-D-Ala-D-Ala)](n)-di-trans,octa-cis-undecaprenyl diphosphate + beta-D-GlcNAc-(1-&gt;4)-Mur2Ac(oyl-L-Ala-gamma-D-Glu-L-Lys-D-Ala-D-Ala)-di-trans,octa-cis-undecaprenyl diphosphate = [GlcNAc-(1-&gt;4)-Mur2Ac(oyl-L-Ala-gamma-D-Glu-L-Lys-D-Ala-D-Ala)](n+1)-di-trans,octa-cis-undecaprenyl diphosphate + di-trans,octa-cis-undecaprenyl diphosphate + H(+). Its pathway is cell wall biogenesis; peptidoglycan biosynthesis. In terms of biological role, peptidoglycan polymerase that catalyzes glycan chain elongation from lipid-linked precursors. The chain is Biosynthetic peptidoglycan transglycosylase from Nitrosomonas eutropha (strain DSM 101675 / C91 / Nm57).